Reading from the N-terminus, the 261-residue chain is UPF0246 protein Reut_A1014 (261 aa).

This sequence belongs to the UPF0246 family.

The polypeptide is UPF0246 protein Reut_A1014 (Cupriavidus pinatubonensis (strain JMP 134 / LMG 1197) (Cupriavidus necator (strain JMP 134))).